Consider the following 251-residue polypeptide: 2,3-bisphosphoglycerate-dependent phosphoglycerate mutase (251 aa).

Residues 11-18 (RHGESDWN), 24-25 (TG), arginine 63, 90-93 (ERHY), lysine 101, 117-118 (RR), and 184-185 (GN) contribute to the substrate site. The active-site Tele-phosphohistidine intermediate is the histidine 12. Glutamate 90 functions as the Proton donor/acceptor in the catalytic mechanism.

The protein belongs to the phosphoglycerate mutase family. BPG-dependent PGAM subfamily.

The enzyme catalyses (2R)-2-phosphoglycerate = (2R)-3-phosphoglycerate. The protein operates within carbohydrate degradation; glycolysis; pyruvate from D-glyceraldehyde 3-phosphate: step 3/5. In terms of biological role, catalyzes the interconversion of 2-phosphoglycerate and 3-phosphoglycerate. This Mycobacterium marinum (strain ATCC BAA-535 / M) protein is 2,3-bisphosphoglycerate-dependent phosphoglycerate mutase.